A 379-amino-acid chain; its full sequence is MMFNFAQPVYPLVLTAAKNNPENAHQQLLKTLHRLDENRHTVWGKWILENLDHSFTFEDSRLQQNLWGLTFKTPVGLAAGCDKDGLAAGIWDHFGFGFAEIGAVTLHAQPGNPKPRLFRLPQDKAALNRLGANNQGAQKVAQTLKETWQRQPRQIPIGINLCKSKITPLEQAAMDYVGSFRYLEEDADYFVVNVSSPNTPGLRSLQEGEQLNVILQELQSVNSLTKPILVKISPDLSWESIKLIIKLAKTYQLAGIIATNTTIKREGLKTNILEKTGNSIQEEAGGISGQPIRQRSTEVIRFIYEQTQGTLPIIGVGGIFTAEDAWEKITSGASLLQLYTGWIYQGPWCISNINRGLVRKLEKYKLSHISEAVGMDFNS.

FMN is bound by residues 79 to 83 (AGCDK) and Ala103. A substrate-binding site is contributed by Lys83. Position 128–131 (128–131 (NRLG)) interacts with substrate. FMN contacts are provided by Asn160 and Asn193. Residue Asn193 coordinates substrate. The active-site Nucleophile is the Ser196. Asn198 contributes to the substrate binding site. Positions 231 and 259 each coordinate FMN. 260-261 (NT) is a binding site for substrate. FMN-binding positions include Gly289, Gly318, and 339 to 340 (YT).

The protein belongs to the dihydroorotate dehydrogenase family. Type 2 subfamily. In terms of assembly, monomer. The cofactor is FMN.

The protein resides in the cell membrane. It catalyses the reaction (S)-dihydroorotate + a quinone = orotate + a quinol. The protein operates within pyrimidine metabolism; UMP biosynthesis via de novo pathway; orotate from (S)-dihydroorotate (quinone route): step 1/1. Functionally, catalyzes the conversion of dihydroorotate to orotate with quinone as electron acceptor. This Crocosphaera subtropica (strain ATCC 51142 / BH68) (Cyanothece sp. (strain ATCC 51142)) protein is Dihydroorotate dehydrogenase (quinone).